A 239-amino-acid polypeptide reads, in one-letter code: Cysteine-rich venom protein natrin-1 (239 aa).

The first 18 residues, 1–18 (MIAFSLLCFAAVLQQSFG), serve as a signal peptide directing secretion. The SCP domain maps to 37 to 165 (VDLHNSLRRR…AWSYFYVCQY (129 aa)). 8 cysteine pairs are disulfide-bonded: Cys-74–Cys-152, Cys-91–Cys-166, Cys-147–Cys-163, Cys-185–Cys-192, Cys-188–Cys-197, Cys-201–Cys-234, Cys-210–Cys-228, and Cys-219–Cys-232. Positions 201 to 234 (CTIYNKLTNCDSLLKQSSCQDDWIKSNCPASCFC) constitute a ShKT domain.

As to expression, expressed by the venom gland.

It localises to the secreted. In terms of biological role, inhibits calcium-activated potassium channels (KCa1.1/KCNMA1), voltage-gated potassium channel Kv1.3/KCNA3, and the calcium release channel/ryanodine receptor (RyR). Binds specifically to type 1 RyR (RyR1) from skeletal muscle. Inhibit both the binding of ryanodine to RyR1, and RyR1's calcium-channel activity. Inhibits carbachol-induced muscle contraction and weakly blocks muscle contraction evoked by potassium. The polypeptide is Cysteine-rich venom protein natrin-1 (Naja atra (Chinese cobra)).